The sequence spans 199 residues: Recombination protein RecR (199 aa).

Residues 58 to 73 (CSTCNNLTDKDPCTIC) form a C4-type zinc finger. The Toprim domain maps to 81–176 (NLICVVQDAR…RVTRLAYGLP (96 aa)).

It belongs to the RecR family.

Its function is as follows. May play a role in DNA repair. It seems to be involved in an RecBC-independent recombinational process of DNA repair. It may act with RecF and RecO. This chain is Recombination protein RecR, found in Natranaerobius thermophilus (strain ATCC BAA-1301 / DSM 18059 / JW/NM-WN-LF).